A 152-amino-acid chain; its full sequence is Small ribosomal subunit protein uS13z/uS13y/uS13x (152 aa).

Position 2 is an N-acetylserine (S2).

It belongs to the universal ribosomal protein uS13 family.

It is found in the cytoplasm. In terms of biological role, located at the top of the head of the 40S subunit, it contacts several helices of the 18S rRNA. This chain is Small ribosomal subunit protein uS13z/uS13y/uS13x (RPS18A), found in Arabidopsis thaliana (Mouse-ear cress).